The following is a 124-amino-acid chain: T cell receptor beta variable 13 (124 aa).

The N-terminal stretch at 1–31 (MLSPDLPDSAWNTRLLCRVMLCLLGAGSVAA) is a signal peptide. In terms of domain architecture, Ig-like spans 32–124 (GVIQSPRHLI…SALYFCASSL (93 aa)). Cysteine 52 and cysteine 120 are disulfide-bonded. Asparagine 106 carries N-linked (GlcNAc...) asparagine glycosylation.

As to quaternary structure, alpha-beta TR is a heterodimer composed of an alpha and beta chain; disulfide-linked. The alpha-beta TR is associated with the transmembrane signaling CD3 coreceptor proteins to form the TR-CD3 (TcR or TCR). The assembly of alpha-beta TR heterodimers with CD3 occurs in the endoplasmic reticulum where a single alpha-beta TR heterodimer associates with one CD3D-CD3E heterodimer, one CD3G-CD3E heterodimer and one CD247 homodimer forming a stable octameric structure. CD3D-CD3E and CD3G-CD3E heterodimers preferentially associate with TR alpha and TR beta chains, respectively. The association of the CD247 homodimer is the last step of TcR assembly in the endoplasmic reticulum and is required for transport to the cell surface.

The protein localises to the cell membrane. Functionally, v region of the variable domain of T cell receptor (TR) beta chain that participates in the antigen recognition. Alpha-beta T cell receptors are antigen specific receptors which are essential to the immune response and are present on the cell surface of T lymphocytes. Recognize peptide-major histocompatibility (MH) (pMH) complexes that are displayed by antigen presenting cells (APC), a prerequisite for efficient T cell adaptive immunity against pathogens. Binding of alpha-beta TR to pMH complex initiates TR-CD3 clustering on the cell surface and intracellular activation of LCK that phosphorylates the ITAM motifs of CD3G, CD3D, CD3E and CD247 enabling the recruitment of ZAP70. In turn ZAP70 phosphorylates LAT, which recruits numerous signaling molecules to form the LAT signalosome. The LAT signalosome propagates signal branching to three major signaling pathways, the calcium, the mitogen-activated protein kinase (MAPK) kinase and the nuclear factor NF-kappa-B (NF-kB) pathways, leading to the mobilization of transcription factors that are critical for gene expression and essential for T cell growth and differentiation. The T cell repertoire is generated in the thymus, by V-(D)-J rearrangement. This repertoire is then shaped by intrathymic selection events to generate a peripheral T cell pool of self-MH restricted, non-autoaggressive T cells. Post-thymic interaction of alpha-beta TR with the pMH complexes shapes TR structural and functional avidity. This is T cell receptor beta variable 13 from Homo sapiens (Human).